A 238-amino-acid polypeptide reads, in one-letter code: Tetrahydromethanopterin S-methyltransferase subunit A 1 (238 aa).

The Cytoplasmic segment spans residues 2–218 (VEKKSPAEGW…RMFAGMYSGK (217 aa)). A 5-hydroxybenzimidazolylcob(I)amide-binding site is contributed by His84. Residues 219–237 (VQGIMIGLAFTLTLGILLL) form a helical membrane-spanning segment. Residue Val238 is a topological domain, extracellular.

This sequence belongs to the MtrA family. In terms of assembly, the complex is composed of 8 subunits; MtrA, MtrB, MtrC, MtrD, MtrE, MtrF, MtrG and MtrH. The cofactor is 5-hydroxybenzimidazolylcob(I)amide.

The protein localises to the cell membrane. The enzyme catalyses 5-methyl-5,6,7,8-tetrahydromethanopterin + coenzyme M + 2 Na(+)(in) = 5,6,7,8-tetrahydromethanopterin + methyl-coenzyme M + 2 Na(+)(out). The protein operates within one-carbon metabolism; methanogenesis from CO(2); methyl-coenzyme M from 5,10-methylene-5,6,7,8-tetrahydromethanopterin: step 2/2. Its function is as follows. Part of a complex that catalyzes the formation of methyl-coenzyme M and tetrahydromethanopterin from coenzyme M and methyl-tetrahydromethanopterin. This is an energy-conserving, sodium-ion translocating step. The protein is Tetrahydromethanopterin S-methyltransferase subunit A 1 of Methanothermobacter marburgensis (strain ATCC BAA-927 / DSM 2133 / JCM 14651 / NBRC 100331 / OCM 82 / Marburg) (Methanobacterium thermoautotrophicum).